The following is a 1323-amino-acid chain: PH domain leucine-rich repeat-containing protein phosphatase 2 (1323 aa).

The 99-residue stretch at 150 to 248 (RILLSGIYNV…WQRQASKVVS (99 aa)) folds into the PH domain. LRR repeat units follow at residues 250-271 (RIST…LFYS), 273-296 (DITY…DTLY), 300-321 (QLKG…LCEI), 323-344 (TLTE…IGNL), 346-368 (NLQT…GNLQ), 369-390 (QLSS…YEKL), 392-412 (MLDR…GVLN), 416-439 (HIKH…EGNK), 440-460 (HITH…SSLC), 461-480 (SLEQ…LSGF), 481-502 (SLRT…PVPS), 503-524 (LLTF…ACEA), 526-547 (KIEV…ILSS), 549-570 (SLRK…VEHI), 571-592 (PLEV…LFSK), 595-616 (NLRY…CTGE), 621-644 (MLQL…VGHL), 645-666 (HLRI…KLNK), 669-690 (QLEE…IANC), 692-713 (RLHT…LQLP), 714-735 (QIQF…EALP), and 737-758 (TLQD…TLDI). The PPM-type phosphatase domain maps to 785–1033 (SHGLAEMAGQ…DNVGAMVVYL (249 aa)). Residues Asp820, Gly821, Lys985, and Asp1024 each coordinate Mn(2+). Residues 1060-1157 (TIKDAPKPAT…DSDDDQPVEG (98 aa)) form a disordered region. Positions 1071 to 1097 (SSSSGIASEFSSEMSTSEVSSEVGSTA) are enriched in low complexity. Positions 1122–1146 (PTPTSGLFQRQPSSATFSSNQSDNG) are enriched in polar residues. At Ser1210 the chain carries Phosphoserine. The disordered stretch occupies residues 1285-1323 (HDLEEEVKEQMKQHQDSRLEPEPHEEDRTEPPEEFDTAL). A compositionally biased stretch (basic and acidic residues) spans 1292-1315 (KEQMKQHQDSRLEPEPHEEDRTEP).

In terms of assembly, interacts with AKT1, AKT3 and PRKCB isoform beta-II. Interacts with STK4, RPS6KB1, RAF1. Interacts with FKBP5; FKBP5 acts as a scaffold for PHLPP2 and Akt. Interacts with NHERF1; NHERF1 scaffolds a heterotrimeric complex with PTEN. Mn(2+) serves as cofactor. As to expression, in colorectal cancer tissue, expression is highest in the surface epithelium of normal colonic mucosa adjacent to the cancer tissue but is largely excluded from the crypt bases. Expression is lost or significantly decreased in 80% of tested tumors (at protein level).

The protein localises to the cytoplasm. It is found in the membrane. Its subcellular location is the nucleus. It carries out the reaction O-phospho-L-seryl-[protein] + H2O = L-seryl-[protein] + phosphate. It catalyses the reaction O-phospho-L-threonyl-[protein] + H2O = L-threonyl-[protein] + phosphate. Its activity is regulated as follows. Inhibited by AKT1, AKT2 and AKT3. Activated by oleic acid and arachidonic acid. In terms of biological role, protein phosphatase involved in regulation of Akt and PKC signaling. Mediates dephosphorylation in the C-terminal domain hydrophobic motif of members of the AGC Ser/Thr protein kinase family; specifically acts on 'Ser-473' of AKT1, 'Ser-660' of PRKCB isoform beta-II and 'Ser-657' of PRKCA. Akt regulates the balance between cell survival and apoptosis through a cascade that primarily alters the function of transcription factors that regulate pro- and antiapoptotic genes. Dephosphorylation of 'Ser-473' of Akt triggers apoptosis and decreases cell proliferation. Also controls the phosphorylation of AKT3. Dephosphorylates STK4 on 'Thr-387' leading to STK4 activation and apoptosis. Dephosphorylates RPS6KB1 and is involved in regulation of cap-dependent translation. Inhibits cancer cell proliferation and may act as a tumor suppressor. Dephosphorylation of PRKCA and PRKCB leads to their destabilization and degradation. Dephosphorylates RAF1 inhibiting its kinase activity. This chain is PH domain leucine-rich repeat-containing protein phosphatase 2 (PHLPP2), found in Homo sapiens (Human).